The following is a 202-amino-acid chain: Prostamide/prostaglandin F synthase (202 aa).

Tyrosine 108 bears the Phosphotyrosine mark.

It belongs to the peroxiredoxin-like PRXL2 family. Prostamide/prostaglandin F synthase subfamily.

Its subcellular location is the cytoplasm. The protein resides in the cytosol. The enzyme catalyses prostaglandin H2 + [thioredoxin]-dithiol = prostaglandin F2alpha + [thioredoxin]-disulfide. The catalysed reaction is prostamide F2alpha + [thioredoxin]-disulfide = prostamide H2 + [thioredoxin]-dithiol. Its function is as follows. Catalyzes the reduction of prostaglandin-ethanolamide H(2) (prostamide H(2)) to prostamide F(2alpha) with NADPH as proton donor. Also able to reduce prostaglandin H(2) to prostaglandin F(2alpha). The protein is Prostamide/prostaglandin F synthase (PRXL2B) of Sus scrofa (Pig).